We begin with the raw amino-acid sequence, 1336 residues long: Adhesion G protein-coupled receptor A2 (1336 aa).

The first 33 residues, 1–33 (MGAGGRRMPVPPARLLLLPLLPCLLLLAPGTRG), serve as a signal peptide directing secretion. Residues 34-769 (APGCPVPIRG…AGGSGAGLHP (736 aa)) lie on the Extracellular side of the membrane. Asparagine 84 and asparagine 101 each carry an N-linked (GlcNAc...) asparagine glycan. LRR repeat units follow at residues 85 to 106 (GTIT…SFLG), 109 to 130 (LLEK…AFLG), 133 to 154 (ELKR…TFQG), and 157 to 178 (RLLR…VFDE). Asparagine 162 carries an N-linked (GlcNAc...) asparagine glycan. Positions 190–241 (EFLTCDCRLRWLLPWARNHSLQLSERTLCAYPSALHAHALSSLQESQLRCEG) constitute an LRRCT domain. Residues 247-344 (THYLIPSLRQ…GNTSKKVEIV (98 aa)) form the Ig-like domain. Cysteine 268 and cysteine 328 are disulfide-bonded. N-linked (GlcNAc...) asparagine glycosylation is present at asparagine 275. Residues 362–364 (RGD) carry the RGD motif. Positions 594–757 (FRCTTGRPNI…AVLMELNAFP (164 aa)) constitute a GAIN-B domain. Asparagine 602, asparagine 691, and asparagine 735 each carry an N-linked (GlcNAc...) asparagine glycan. A GPS region spans residues 711 to 757 (AAWWNQDGPGGWSSEGCRLRYSQPNVSSLYCQHLGNVAVLMELNAFP). Cysteine 727 and cysteine 741 are oxidised to a cystine. Residues 770-790 (VVYPCTALLLLCLFSTIITYI) form a helical membrane-spanning segment. Over 791–805 (LNHSSIHVSRKGWHM) the chain is Cytoplasmic. Residues 806-826 (LLNLCFHMAMTSAVFVGGVTL) traverse the membrane as a helical segment. Topologically, residues 827–830 (TNYQ) are extracellular. Residues 831–851 (MVCQAVGITLHYSSLSSLLWM) form a helical membrane-spanning segment. Residues 852–884 (GVKARVLHKELSWRAPPLEEGEAAPPGPRPMLR) are Cytoplasmic-facing. A helical membrane pass occupies residues 885–905 (FYLIAGGIPLIICGITAAVNI). At 906-922 (HNYRDHSPYCWLVWRPS) the chain is on the extracellular side. A helical transmembrane segment spans residues 923–943 (LGAFYIPVALILPITWIYFLC). At 944–1016 (AGLHLRSHVA…DGVYSPGVQL (73 aa)) the chain is on the cytoplasmic side. A helical transmembrane segment spans residues 1017–1037 (GALMTTHFLYLAMWACGALAV). Over 1038–1044 (SQRWLPR) the chain is Extracellular. The chain crosses the membrane as a helical span at residues 1045-1065 (VVCSCLYGVAASALGLFVFTH). The Cytoplasmic segment spans residues 1066-1336 (HCARRRDVRA…TGLWKSETTV (271 aa)). Over residues 1084-1095 (ASPSASHVPARA) the composition is skewed to low complexity. The disordered stretch occupies residues 1084 to 1310 (ASPSASHVPA…NGAPKGGKYE (227 aa)). The residue at position 1104 (serine 1104) is a Phosphoserine. Residues 1110 to 1124 (GPASLKSSPSGSSGR) are compositionally biased toward low complexity. Residues 1133 to 1143 (TNLQVAQSQVC) show a composition bias toward polar residues. Positions 1166-1186 (PRHHNNLHHGRRVHKSRAKGH) are enriched in basic residues. Over residues 1213–1234 (SSESGSLHNSPSDSYPGSSRNS) the composition is skewed to polar residues. A PDZ-binding motif is present at residues 1333–1336 (ETTV).

It belongs to the G-protein coupled receptor 2 family. Adhesion G-protein coupled receptor (ADGR) subfamily. Interacts with RECK; the interaction is direct. Interacts (via PDZ-binding motif) with DLG1 (via PDZ domains). The cleaved extracellular subunit interacts with the integrin heterodimer ITGAV:ITGB3. In terms of processing, glycosylated. Proteolytically cleaved into two subunits, an extracellular subunit and a seven-transmembrane subunit. Cleaved by thrombin (F2) and MMP1. Also cleaved by MMP9, with lower efficiency. Presence of the protein disulfide-isomerase P4HB at the cell surface is additionally required for shedding of the extracellular subunit, suggesting that the subunits are linked by disulfide bonds. Shedding is enhanced by the growth factor FGF2 and may promote cell survival during angiogenesis. In terms of tissue distribution, abundantly expressed in the vasculature of the developing embryo. Expression in normal adult tissues is specifically vascular with endothelial expression in CNS, including brain and retina and more widespread pericyte expression in the brain and organs, including the kidney, pancreas and corpus luteum.

Its subcellular location is the cell membrane. The protein localises to the cell projection. The protein resides in the filopodium. Its function is as follows. Endothelial receptor which functions together with RECK to enable brain endothelial cells to selectively respond to Wnt7 signals (WNT7A or WNT7B). Plays a key role in Wnt7-specific responses, such as endothelial cell sprouting and migration in the forebrain and neural tube, and establishment of the blood-brain barrier. Acts as a Wnt7-specific coactivator of canonical Wnt signaling: required to deliver RECK-bound Wnt7 to frizzled by assembling a higher-order RECK-ADGRA2-Fzd-LRP5-LRP6 complex. ADGRA2-tethering function does not rely on its G-protein coupled receptor (GPCR) structure but instead on its combined capacity to interact with RECK extracellularly and recruit the Dishevelled scaffolding protein intracellularly. Binds to the glycosaminoglycans heparin, heparin sulfate, chondroitin sulfate and dermatan sulfate. This Mus musculus (Mouse) protein is Adhesion G protein-coupled receptor A2.